A 214-amino-acid polypeptide reads, in one-letter code: Adenylate kinase (214 aa).

10 to 15 (GAGKGT) provides a ligand contact to ATP. The segment at 30-59 (STGDMLRAAIKEGTPLGLEAKKVMDAGQLI) is NMP. Residues Thr-31, Arg-36, 57 to 59 (QLI), 85 to 88 (GFPR), and Gln-92 contribute to the AMP site. The interval 122–159 (GRRVHPGSGRVYHVVYNPPKVADKDNETGEELIIRADD) is LID. ATP-binding positions include Arg-123 and 132-133 (VY). Arg-156 and Arg-167 together coordinate AMP. Gln-200 serves as a coordination point for ATP.

The protein belongs to the adenylate kinase family. Monomer.

It localises to the cytoplasm. The catalysed reaction is AMP + ATP = 2 ADP. Its pathway is purine metabolism; AMP biosynthesis via salvage pathway; AMP from ADP: step 1/1. Functionally, catalyzes the reversible transfer of the terminal phosphate group between ATP and AMP. Plays an important role in cellular energy homeostasis and in adenine nucleotide metabolism. The chain is Adenylate kinase from Pseudoalteromonas translucida (strain TAC 125).